The primary structure comprises 160 residues: Phosphopantetheine adenylyltransferase (160 aa).

Serine 9 lines the substrate pocket. ATP is bound by residues 9-10 (SF) and histidine 17. Lysine 41, isoleucine 73, and lysine 87 together coordinate substrate. ATP contacts are provided by residues 88-90 (GLR), glutamate 98, and 122-128 (YSFVSSS).

This sequence belongs to the bacterial CoaD family. As to quaternary structure, homohexamer. Mg(2+) serves as cofactor.

It is found in the cytoplasm. It catalyses the reaction (R)-4'-phosphopantetheine + ATP + H(+) = 3'-dephospho-CoA + diphosphate. It participates in cofactor biosynthesis; coenzyme A biosynthesis; CoA from (R)-pantothenate: step 4/5. Functionally, reversibly transfers an adenylyl group from ATP to 4'-phosphopantetheine, yielding dephospho-CoA (dPCoA) and pyrophosphate. In Mycolicibacterium vanbaalenii (strain DSM 7251 / JCM 13017 / BCRC 16820 / KCTC 9966 / NRRL B-24157 / PYR-1) (Mycobacterium vanbaalenii), this protein is Phosphopantetheine adenylyltransferase.